A 698-amino-acid chain; its full sequence is MEEPSPVPPAAAPASLAAAPPTTDVLSRRRAHLDSASYRALSRLFSHCLHLHPPRHAARPDAEVEPAAAAAIPPGGSGGLPHGDSPPPADVGGDRGKNLEVEVALGNHAPHETPSTSASPDAAVNPTTDPGVVPQGTEEGRVAGVERVEGVEEVVFAGGTSGEADADGDELGAGAGLMGDDEALRSMQACLDGEDSELVIEMVGNDNEQLQLDAMMNNLSGLIDDASACVMSAQSCGVSGDKLQSDDRVAEEVKELGAGIGNDRSVCSLDHGSLDGGGGFEEGEIEGDTQNLDADDSGNSELQDDVELEEDFDSRRIEEDGSCGHDLKSNLHLIPQKGNGDTARNMLCNSKGDSQMHVARAQAVSYDEVLDWNETPLPDDKALKHGNTRKRTLTEERKAKKTKTKRIKRALQREAEGVKRLKLQPVIKPKVVKVCHFYLHGKCQQGNLCKFSHDTTPLTKSKPCTHYARGSCLKGDDCPYDHELSKYPCHNFMENGMCIRGDKCKFSHVIPTAEGPSTPDAKKSNASSVPEKANCQEQTSRQKTSTVYSGEPATSVPIKHHSILKNLAGISGNAQKVPVRIPRGIQFLPFNKARPDSSILHQDVVSTEKHKNPTGGPHQNFGRPQPADGKKLGKHNGHRSAPLLDEKDSSKQANLHPCSEPKKNSLPTTAAVPSSVSTQHEVSEASRILQEFLFGSGN.

Residues 1-11 show a composition bias toward pro residues; the sequence is MEEPSPVPPAA. Disordered regions lie at residues 1–23, 56–95, 109–137, and 272–300; these read MEEP…PPTT, HAAR…GGDR, APHE…PQGT, and GSLD…SGNS. 2 stretches are compositionally biased toward low complexity: residues 12 to 21 and 65 to 74; these read APASLAAAPP and EPAAAAAIPP. Residues 281 to 300 show a composition bias toward acidic residues; sequence EEGEIEGDTQNLDADDSGNS. 3 consecutive C3H1-type zinc fingers follow at residues 429–456, 458–485, and 486–511; these read PKVV…HDTT, LTKS…HELS, and KYPC…HVIP. Disordered regions lie at residues 512–553 and 607–682; these read TAEG…GEPA and TEKH…QHEV. 2 stretches are compositionally biased toward polar residues: residues 535–548 and 665–680; these read CQEQ…STVY and SLPT…STQH.

This Oryza sativa subsp. japonica (Rice) protein is Zinc finger CCCH domain-containing protein 7.